The chain runs to 219 residues: MVDLKTKAFDISQNFTISLDGPAASGKGTIGLILAKKFSLKYFQSSIVYRQLAFDCISQKIDVTDIDAVIALSKELKLDNNFDLENENIGNIASQIAVISEIRNNLNKYLINLVKTTPRMIMEGRDIGTVVAPDADLKIFITANPQIRAERRYKQLQAKGKTCILDEILRQIILRDKRDKERKAAPLLPASDALIIDTSKLSAMEVVEEVTNYIKNKIT.

21–29 is an ATP binding site; it reads GPAASGKGT.

This sequence belongs to the cytidylate kinase family. Type 1 subfamily.

The protein resides in the cytoplasm. The enzyme catalyses CMP + ATP = CDP + ADP. It carries out the reaction dCMP + ATP = dCDP + ADP. This chain is Cytidylate kinase, found in Rickettsia africae (strain ESF-5).